Consider the following 150-residue polypeptide: MQIILLEKVLNVGNLGDIVKVKDGYARNFLIPNKKARRATKEAIAEFEVRRAELEKVAAEKLSAAQAQGEKLSGMTVQIAQKAGVDGRLFGSVTNADIAAALGKQGFEVEKAQVRLPEGPLKMVGDHPVHVSLHTDVTVDVTVSVLGEHV.

The protein belongs to the bacterial ribosomal protein bL9 family.

In terms of biological role, binds to the 23S rRNA. The sequence is that of Large ribosomal subunit protein bL9 from Paraburkholderia phymatum (strain DSM 17167 / CIP 108236 / LMG 21445 / STM815) (Burkholderia phymatum).